Reading from the N-terminus, the 881-residue chain is Protein translocase subunit SecA (881 aa).

ATP-binding positions include Q83, 101 to 105 (GEGKT), and D492.

The protein belongs to the SecA family.

It localises to the plastid. The protein localises to the chloroplast stroma. It is found in the chloroplast thylakoid membrane. It catalyses the reaction ATP + H2O + cellular proteinSide 1 = ADP + phosphate + cellular proteinSide 2.. Has a central role in coupling the hydrolysis of ATP to the transfer of proteins across the thylakoid membrane. The chain is Protein translocase subunit SecA from Emiliania huxleyi (Coccolithophore).